A 292-amino-acid chain; its full sequence is Acetylglutamate kinase (292 aa).

Residues 60-61, Arg-82, and Asn-187 each bind substrate; that span reads GG.

The protein belongs to the acetylglutamate kinase family. ArgB subfamily.

The protein resides in the cytoplasm. The enzyme catalyses N-acetyl-L-glutamate + ATP = N-acetyl-L-glutamyl 5-phosphate + ADP. Its pathway is amino-acid biosynthesis; L-arginine biosynthesis; N(2)-acetyl-L-ornithine from L-glutamate: step 2/4. Its function is as follows. Catalyzes the ATP-dependent phosphorylation of N-acetyl-L-glutamate. This Methanobrevibacter smithii (strain ATCC 35061 / DSM 861 / OCM 144 / PS) protein is Acetylglutamate kinase.